Reading from the N-terminus, the 261-residue chain is Thiazole synthase (261 aa).

Catalysis depends on Lys102, which acts as the Schiff-base intermediate with DXP. Residues Gly163, 189–190 (AG), and 211–212 (NT) each bind 1-deoxy-D-xylulose 5-phosphate.

This sequence belongs to the ThiG family. Homotetramer. Forms heterodimers with either ThiH or ThiS.

The protein localises to the cytoplasm. It carries out the reaction [ThiS sulfur-carrier protein]-C-terminal-Gly-aminoethanethioate + 2-iminoacetate + 1-deoxy-D-xylulose 5-phosphate = [ThiS sulfur-carrier protein]-C-terminal Gly-Gly + 2-[(2R,5Z)-2-carboxy-4-methylthiazol-5(2H)-ylidene]ethyl phosphate + 2 H2O + H(+). The protein operates within cofactor biosynthesis; thiamine diphosphate biosynthesis. Catalyzes the rearrangement of 1-deoxy-D-xylulose 5-phosphate (DXP) to produce the thiazole phosphate moiety of thiamine. Sulfur is provided by the thiocarboxylate moiety of the carrier protein ThiS. In vitro, sulfur can be provided by H(2)S. The sequence is that of Thiazole synthase from Acinetobacter baumannii (strain SDF).